A 371-amino-acid chain; its full sequence is Putative phosphoserine aminotransferase (371 aa).

Arg45 is an L-glutamate binding site. Residues Phe103, Thr149, Asp171, and Gln194 each coordinate pyridoxal 5'-phosphate. At Lys195 the chain carries N6-(pyridoxal phosphate)lysine. 246 to 247 (NT) contributes to the pyridoxal 5'-phosphate binding site.

The protein belongs to the class-V pyridoxal-phosphate-dependent aminotransferase family. SerC subfamily. In terms of assembly, homodimer. It depends on pyridoxal 5'-phosphate as a cofactor.

It is found in the cytoplasm. The enzyme catalyses O-phospho-L-serine + 2-oxoglutarate = 3-phosphooxypyruvate + L-glutamate. It catalyses the reaction 4-(phosphooxy)-L-threonine + 2-oxoglutarate = (R)-3-hydroxy-2-oxo-4-phosphooxybutanoate + L-glutamate. It functions in the pathway amino-acid biosynthesis; L-serine biosynthesis; L-serine from 3-phospho-D-glycerate: step 2/3. Its pathway is cofactor biosynthesis; pyridoxine 5'-phosphate biosynthesis; pyridoxine 5'-phosphate from D-erythrose 4-phosphate: step 3/5. In terms of biological role, catalyzes the reversible conversion of 3-phosphohydroxypyruvate to phosphoserine and of 3-hydroxy-2-oxo-4-phosphonooxybutanoate to phosphohydroxythreonine. The sequence is that of Putative phosphoserine aminotransferase from Mycolicibacterium vanbaalenii (strain DSM 7251 / JCM 13017 / BCRC 16820 / KCTC 9966 / NRRL B-24157 / PYR-1) (Mycobacterium vanbaalenii).